The chain runs to 239 residues: Small ribosomal subunit protein eS1 (239 aa).

Residues 1–24 (MAIQPPGSYPQGNKKGKAKKKSGQ) form a disordered region.

This sequence belongs to the eukaryotic ribosomal protein eS1 family. As to quaternary structure, component of the small ribosomal subunit. Mature ribosomes consist of a small (40S) and a large (60S) subunit. The 40S subunit contains about 33 different proteins and 1 molecule of RNA (18S). The 60S subunit contains about 49 different proteins and 3 molecules of RNA (25S, 5.8S and 5S).

It localises to the cytoplasm. In Encephalitozoon cuniculi (strain GB-M1) (Microsporidian parasite), this protein is Small ribosomal subunit protein eS1.